The primary structure comprises 214 residues: Membrane-spanning 4-domains subfamily A member 3 (214 aa).

Residues 1–31 form a disordered region; the sequence is MASHEVDNAELGSASAHGTPGSEAGPEELNT. The Cytoplasmic portion of the chain corresponds to 1 to 49; the sequence is MASHEVDNAELGSASAHGTPGSEAGPEELNTSVYQPIDGSPDYQKAKLQ. A helical transmembrane segment spans residues 50-70; it reads VLGAIQILNAAMILALGVFLG. The Extracellular segment spans residues 71-81; that stretch reads SLQYPYHFQKH. The helical transmembrane segment at 82 to 102 threads the bilayer; that stretch reads FFFFTFYTGYPIWGAVFFCSS. Topologically, residues 103 to 124 are cytoplasmic; sequence GTLSVVAGIKPTRTWIQNSFGM. Residues 125-145 traverse the membrane as a helical segment; sequence NIASATIALVGTAFLSLNIAV. Topologically, residues 146 to 175 are extracellular; the sequence is NIQSLRSCHSSSESPDLCNYMGSISNGMVS. The chain crosses the membrane as a helical span at residues 176–196; sequence LLLILTLLELCVTISTIAMWC. The Cytoplasmic portion of the chain corresponds to 197-214; that stretch reads NANCCNSREEISSPPNSV.

It belongs to the MS4A family. As to quaternary structure, interacts with CDKN3. Interacts with CDKN3-CDK2 complexes through its binding to CDKN3; this interaction facilitates dissociation of cyclin A from CDKN3-CDK2 complexes. Expressed specifically in hematopoietic cells and tissues.

It localises to the endomembrane system. The protein resides in the cytoplasm. The protein localises to the perinuclear region. Hematopoietic modulator for the G1-S cell cycle transition. Modulates the level of phosphorylation of cyclin-dependent kinase 2 (CDK2) through its direct binding to cyclin-dependent kinase inhibitor 3 (CDKN3/KAP). The protein is Membrane-spanning 4-domains subfamily A member 3 (MS4A3) of Homo sapiens (Human).